A 960-amino-acid polypeptide reads, in one-letter code: Vacuolar membrane protease (960 aa).

Residues 1 to 57 are Cytoplasmic-facing; it reads MADNNSSSGSLVIDEQDYDVHEAGQQGQQGQQKHQQRQQERPSLITRVFRSVFGYRK. A disordered region spans residues 22-41; sequence EAGQQGQQGQQKHQQRQQER. The span at 24–33 shows a compositional bias: low complexity; sequence GQQGQQGQQK. A helical transmembrane segment spans residues 58 to 78; the sequence is TSLSLFVVATIALCVSLSYID. The Vacuolar portion of the chain corresponds to 79–401; it reads NSVDFISFPT…FTISTSQLFK (323 aa). The N-linked (GlcNAc...) asparagine glycan is linked to N148. H189 and D201 together coordinate Zn(2+). The active-site Proton acceptor is E235. Residues E236, E261, and H333 each coordinate Zn(2+). Residues 402-422 form a helical membrane-spanning segment; the sequence is INVALLTVFPILNGLLLLYTI. Topologically, residues 423 to 432 are cytoplasmic; it reads RSRKWQVSFS. A helical membrane pass occupies residues 433–453; it reads SAISIPVALLVTMFIVVYLVV. Residues 454–476 lie on the Vacuolar side of the membrane; it reads ESYKSFNQYLPSSRPLLLVATIT. The chain crosses the membrane as a helical span at residues 477-497; it reads SILLLVFSIILVAFSFFSIIA. Over 498–502 the chain is Cytoplasmic; it reads EENLR. A helical transmembrane segment spans residues 503–523; that stretch reads LLAIVELSFAYWVGLAFTTHG. The Vacuolar portion of the chain corresponds to 524–535; that stretch reads LSGAESARHSGE. A helical membrane pass occupies residues 536–556; the sequence is FAVSILFTLEAVASFLGLIGW. The Cytoplasmic portion of the chain corresponds to 557 to 635; the sequence is SLCRNRSHLQ…FGYDWSLQYL (79 aa). Residues 587–605 show a composition bias toward basic and acidic residues; the sequence is NDHDHEHRHGHEDNEHGEA. Residues 587–614 are disordered; it reads NDHDHEHRHGHEDNEHGEAHVQQQSQSR. Residues 636–656 traverse the membrane as a helical segment; that stretch reads ITVPLSIFIIYNSGWLVLEGV. Residue N657 is glycosylated (N-linked (GlcNAc...) asparagine). Residues 657 to 668 lie on the Vacuolar side of the membrane; the sequence is NKTLQESAKAET. A helical transmembrane segment spans residues 669 to 689; the sequence is FVYNLLWIVSVSLVLPLIPFA. Residues 690-696 are Cytoplasmic-facing; sequence GKLNRYM. A helical transmembrane segment spans residues 697–717; the sequence is VFVLIAIGVLGTLLVHVVQPF. Residues 718-960 lie on the Vacuolar side of the membrane; sequence NEANPLKLRF…LVAYTKQVHV (243 aa). N-linked (GlcNAc...) asparagine glycans are attached at residues N736, N763, N803, N875, and N921.

This sequence belongs to the peptidase M28 family. Requires Zn(2+) as cofactor.

The protein resides in the vacuole membrane. Functionally, may be involved in vacuolar sorting and osmoregulation. This is Vacuolar membrane protease from Lodderomyces elongisporus (strain ATCC 11503 / CBS 2605 / JCM 1781 / NBRC 1676 / NRRL YB-4239) (Yeast).